We begin with the raw amino-acid sequence, 384 residues long: Probable beta-1,3-galactosyltransferase 1 (384 aa).

Residues serine 21 to isoleucine 43 form a helical; Signal-anchor for type II membrane protein membrane-spanning segment. Residues asparagine 73 and asparagine 105 are each glycosylated (N-linked (GlcNAc...) asparagine).

Belongs to the glycosyltransferase 31 family. The cofactor is Mn(2+).

The protein resides in the golgi apparatus membrane. It functions in the pathway protein modification; protein glycosylation. Beta-1,3-galactosyltransferase that transfers galactose from UDP-galactose to substrates with a terminal glycosyl residue. In Arabidopsis thaliana (Mouse-ear cress), this protein is Probable beta-1,3-galactosyltransferase 1 (B3GALT1).